Reading from the N-terminus, the 471-residue chain is Cytochrome P450 monooxygenase afvE (471 aa).

The chain crosses the membrane as a helical span at residues Ile265–Tyr285. Cys410 is a heme binding site.

This sequence belongs to the cytochrome P450 family. Heme is required as a cofactor.

The protein resides in the membrane. It participates in secondary metabolite biosynthesis. Cytochrome P450 monooxygenase; part of the gene cluster that mediates the biosynthesis of aflavarin, a bicoumarin that exhibits anti-insectan activity against the fungivorous beetle C.hemipterus. The protein is Cytochrome P450 monooxygenase afvE of Aspergillus flavus (strain ATCC 200026 / FGSC A1120 / IAM 13836 / NRRL 3357 / JCM 12722 / SRRC 167).